A 444-amino-acid chain; its full sequence is Exodeoxyribonuclease 7 large subunit (444 aa).

Belongs to the XseA family. In terms of assembly, heterooligomer composed of large and small subunits.

Its subcellular location is the cytoplasm. It carries out the reaction Exonucleolytic cleavage in either 5'- to 3'- or 3'- to 5'-direction to yield nucleoside 5'-phosphates.. Bidirectionally degrades single-stranded DNA into large acid-insoluble oligonucleotides, which are then degraded further into small acid-soluble oligonucleotides. The protein is Exodeoxyribonuclease 7 large subunit of Rickettsia conorii (strain ATCC VR-613 / Malish 7).